A 386-amino-acid chain; its full sequence is Galactokinase (386 aa).

35–38 (EHTD) provides a ligand contact to substrate. Residues S69 and 125–131 (GAGLSSS) contribute to the ATP site. Mg(2+) contacts are provided by S131 and E163. The active-site Proton acceptor is the D175. A substrate-binding site is contributed by Y224.

This sequence belongs to the GHMP kinase family. GalK subfamily.

Its subcellular location is the cytoplasm. The catalysed reaction is alpha-D-galactose + ATP = alpha-D-galactose 1-phosphate + ADP + H(+). It participates in carbohydrate metabolism; galactose metabolism. Catalyzes the transfer of the gamma-phosphate of ATP to D-galactose to form alpha-D-galactose-1-phosphate (Gal-1-P). The chain is Galactokinase from Vibrio vulnificus (strain CMCP6).